Reading from the N-terminus, the 328-residue chain is Malate dehydrogenase (328 aa).

G12–G18 serves as a coordination point for NAD(+). Residues R95 and R101 each contribute to the substrate site. NAD(+) contacts are provided by residues N108, Q115, and V132–N134. Substrate is bound by residues N134 and R165. The active-site Proton acceptor is H190.

Belongs to the LDH/MDH superfamily. MDH type 2 family.

It catalyses the reaction (S)-malate + NAD(+) = oxaloacetate + NADH + H(+). Catalyzes the reversible oxidation of malate to oxaloacetate. The protein is Malate dehydrogenase of Acidovorax ebreus (strain TPSY) (Diaphorobacter sp. (strain TPSY)).